Consider the following 429-residue polypeptide: Adenylosuccinate synthetase (429 aa).

Residues 12–18 and 40–42 each bind GTP; these read GDEGKGK and GHT. Asp-13 (proton acceptor) is an active-site residue. Positions 13 and 40 each coordinate Mg(2+). Residues 13–16, 38–41, Thr-128, Arg-142, Gln-223, Thr-238, and Arg-302 contribute to the IMP site; these read DEGK and NAGH. His-41 functions as the Proton donor in the catalytic mechanism. Residue 298 to 304 participates in substrate binding; sequence TVTGRPR. Residues Arg-304, 330–332, and 412–414 each bind GTP; these read LLD and SVG.

This sequence belongs to the adenylosuccinate synthetase family. Homodimer. Mg(2+) serves as cofactor.

Its subcellular location is the cytoplasm. It catalyses the reaction IMP + L-aspartate + GTP = N(6)-(1,2-dicarboxyethyl)-AMP + GDP + phosphate + 2 H(+). Its pathway is purine metabolism; AMP biosynthesis via de novo pathway; AMP from IMP: step 1/2. Functionally, plays an important role in the de novo pathway of purine nucleotide biosynthesis. Catalyzes the first committed step in the biosynthesis of AMP from IMP. The sequence is that of Adenylosuccinate synthetase from Lactobacillus johnsonii (strain CNCM I-12250 / La1 / NCC 533).